Reading from the N-terminus, the 208-residue chain is ATP phosphoribosyltransferase (208 aa).

The protein belongs to the ATP phosphoribosyltransferase family. Short subfamily. In terms of assembly, heteromultimer composed of HisG and HisZ subunits.

The protein resides in the cytoplasm. The enzyme catalyses 1-(5-phospho-beta-D-ribosyl)-ATP + diphosphate = 5-phospho-alpha-D-ribose 1-diphosphate + ATP. The protein operates within amino-acid biosynthesis; L-histidine biosynthesis; L-histidine from 5-phospho-alpha-D-ribose 1-diphosphate: step 1/9. Catalyzes the condensation of ATP and 5-phosphoribose 1-diphosphate to form N'-(5'-phosphoribosyl)-ATP (PR-ATP). Has a crucial role in the pathway because the rate of histidine biosynthesis seems to be controlled primarily by regulation of HisG enzymatic activity. In Thermotoga neapolitana (strain ATCC 49049 / DSM 4359 / NBRC 107923 / NS-E), this protein is ATP phosphoribosyltransferase.